A 269-amino-acid chain; its full sequence is Formamidopyrimidine-DNA glycosylase (269 aa).

Proline 2 (schiff-base intermediate with DNA) is an active-site residue. Catalysis depends on glutamate 3, which acts as the Proton donor. Catalysis depends on lysine 58, which acts as the Proton donor; for beta-elimination activity. DNA contacts are provided by histidine 91, arginine 110, and lysine 150. The FPG-type zinc-finger motif lies at 235–269; sequence SVYGCKNKKCYRCKGIIIKFVQNQRSTFYCKKCQT. Catalysis depends on arginine 259, which acts as the Proton donor; for delta-elimination activity.

It belongs to the FPG family. As to quaternary structure, monomer. It depends on Zn(2+) as a cofactor.

The catalysed reaction is Hydrolysis of DNA containing ring-opened 7-methylguanine residues, releasing 2,6-diamino-4-hydroxy-5-(N-methyl)formamidopyrimidine.. The enzyme catalyses 2'-deoxyribonucleotide-(2'-deoxyribose 5'-phosphate)-2'-deoxyribonucleotide-DNA = a 3'-end 2'-deoxyribonucleotide-(2,3-dehydro-2,3-deoxyribose 5'-phosphate)-DNA + a 5'-end 5'-phospho-2'-deoxyribonucleoside-DNA + H(+). Functionally, involved in base excision repair of DNA damaged by oxidation or by mutagenic agents. Acts as a DNA glycosylase that recognizes and removes damaged bases. Has a preference for oxidized purines, such as 7,8-dihydro-8-oxoguanine (8-oxoG). Has AP (apurinic/apyrimidinic) lyase activity and introduces nicks in the DNA strand. Cleaves the DNA backbone by beta-delta elimination to generate a single-strand break at the site of the removed base with both 3'- and 5'-phosphates. The sequence is that of Formamidopyrimidine-DNA glycosylase from Vesicomyosocius okutanii subsp. Calyptogena okutanii (strain HA).